A 133-amino-acid polypeptide reads, in one-letter code: MLPAQHKLNSSMQFRTVMRKGRRAGSKTVVVHLWDSAESLDGTEKQGEVASFGGPRFGLVVSKAVGNAVVRHRTSRRLRHICASIVEKSPELLSPTHHVVIRALAGAGNAPSAELERDIRYGLGKTSRVRTNK.

The protein belongs to the RnpA family. As to quaternary structure, consists of a catalytic RNA component (M1 or rnpB) and a protein subunit.

The enzyme catalyses Endonucleolytic cleavage of RNA, removing 5'-extranucleotides from tRNA precursor.. RNaseP catalyzes the removal of the 5'-leader sequence from pre-tRNA to produce the mature 5'-terminus. It can also cleave other RNA substrates such as 4.5S RNA. The protein component plays an auxiliary but essential role in vivo by binding to the 5'-leader sequence and broadening the substrate specificity of the ribozyme. In Corynebacterium glutamicum (strain R), this protein is Ribonuclease P protein component.